Reading from the N-terminus, the 441-residue chain is MRLSQYFLPILKENPKEAEIISHCLMLRAGIIRQQTSGIYSWLPLGKKVLDKVCTIIREEQERAGALEISMPTIQSADLWRESGRYDDYGLEMLRIKDRQERDLLYGPTNEEMVTDIFRSYVRSYKDLPLNLYQIQWKFRDEIRPRFGVMRSREFLMKDGYSFDLDYESAKTSYNRMFIAYLRTFSRIGLKVIPMRADTGPIGGELSHEFIILAKTGESAVFCDKRFLEMTAPPVSVDFTDNVVLTDIVKQWTALYATTEEMHNAEEWAQICKSNQLSARGIEVGHIFYFGTKYSEPMGAKVMGRDGKEYPVFMGSYGIGPSRLVAAAIEASHDENGIIWPKPITPFDFGIINTKSDNAKCYGMCETLYQGLVNAGFDPLLDDRNERPGAKFATMDLIGLPTQIIVGPKSAAQDEVEIKDRKTGTKEVLTVEAALNRLSAM.

It belongs to the class-II aminoacyl-tRNA synthetase family. ProS type 2 subfamily. As to quaternary structure, homodimer.

Its subcellular location is the cytoplasm. It carries out the reaction tRNA(Pro) + L-proline + ATP = L-prolyl-tRNA(Pro) + AMP + diphosphate. Functionally, catalyzes the attachment of proline to tRNA(Pro) in a two-step reaction: proline is first activated by ATP to form Pro-AMP and then transferred to the acceptor end of tRNA(Pro). The chain is Proline--tRNA ligase from Bartonella bacilliformis (strain ATCC 35685 / KC583 / Herrer 020/F12,63).